The sequence spans 161 residues: Nucleotide-binding protein AZOSEA28950 (161 aa).

The protein belongs to the YajQ family.

Its function is as follows. Nucleotide-binding protein. The polypeptide is Nucleotide-binding protein AZOSEA28950 (Aromatoleum aromaticum (strain DSM 19018 / LMG 30748 / EbN1) (Azoarcus sp. (strain EbN1))).